The following is a 57-amino-acid chain: Cecropin-A (57 aa).

A signal peptide spans isoleucine 1–proline 21.

The protein belongs to the cecropin family.

Its subcellular location is the secreted. In terms of biological role, cecropins have lytic and antibacterial activity against several Gram-positive and Gram-negative bacteria. The protein is Cecropin-A (CECA) of Spodoptera litura (Asian cotton leafworm).